Reading from the N-terminus, the 465-residue chain is GTPase Der (465 aa).

2 consecutive EngA-type G domains span residues 3–167 and 179–352; these read PLVA…PEEG and IRIA…ESAN. Residues 9–16, 57–61, 119–122, 185–192, 232–236, and 297–300 each bind GTP; these read GRPNVGKS, DTGGI, NKID, DTAGL, and NKWD. Residues 353–437 enclose the KH-like domain; that stretch reads KTFTTSEVNK…PVSFIFREGT (85 aa).

This sequence belongs to the TRAFAC class TrmE-Era-EngA-EngB-Septin-like GTPase superfamily. EngA (Der) GTPase family. In terms of assembly, associates with the 50S ribosomal subunit.

GTPase that plays an essential role in the late steps of ribosome biogenesis. The sequence is that of GTPase Der from Stenotrophomonas maltophilia (strain R551-3).